A 146-amino-acid chain; its full sequence is Hemoglobin subunit beta/beta' (146 aa).

In terms of domain architecture, Globin spans 2-146 (HWSAEEKQLI…VAHALARKYH (145 aa)). Positions 63 and 92 each coordinate heme b.

This sequence belongs to the globin family. Heterotetramer of two alpha chains and two beta chains. In terms of tissue distribution, red blood cells.

Its function is as follows. Involved in oxygen transport from the lung to the various peripheral tissues. This is Hemoglobin subunit beta/beta' (HBB) from Chroicocephalus ridibundus (Black-headed gull).